The chain runs to 354 residues: Transcription factor HHO2 (354 aa).

Positions 93 to 102 (VQEEEEEDGE) are enriched in acidic residues. Residues 93–112 (VQEEEEEDGEHESSPELVNN) are disordered. The span at 103-112 (HESSPELVNN) shows a compositional bias: basic and acidic residues. In terms of domain architecture, HTH myb-type spans 212 to 272 (THRKQRRCWS…HLQKYRLHTR (61 aa)). A DNA-binding region (H-T-H motif) is located at residues 243 to 268 (PKQIRDHMKVDGLTNDEVKSHLQKYR). Positions 324 to 354 (VAQSPKRSLERSCNSPAASSSTNTNTSTPVS) are disordered. A compositionally biased stretch (low complexity) spans 337 to 354 (NSPAASSSTNTNTSTPVS).

It localises to the nucleus. Its function is as follows. Probable transcription factor involved in phosphate homeostasis. Involved in the regulation of the developmental response of lateral roots, acquisition and/or mobilization of phosphate and expression of a subset of genes involved in phosphate sensing and signaling pathway. Is a target of the transcription factor PHR1. The sequence is that of Transcription factor HHO2 from Arabidopsis thaliana (Mouse-ear cress).